A 113-amino-acid polypeptide reads, in one-letter code: UPF0482 protein YnfB (113 aa).

Residues 1–28 (MKITLSKRIGLLAILLPCALALSTTVHA) form the signal peptide.

The protein belongs to the UPF0482 family.

In Escherichia coli O8 (strain IAI1), this protein is UPF0482 protein YnfB.